The chain runs to 780 residues: Chloride channel protein CLC-b (780 aa).

The interval 1 to 28 (MVEEDLNQIGGNSNYNGEGGDPESNTLN) is disordered. 12 consecutive transmembrane segments (helical) span residues 87–107 (TLAC…NLAV), 130–150 (GLMV…VLCV), 177–197 (FGAT…AAGL), 205–225 (LVHI…DNHR), 247–267 (GSAA…LFAL), 277–297 (ALLW…REFI), 327–347 (VTDI…GSLY), 370–390 (VLLS…LPFL), 452–472 (MGSL…TFGI), 477–497 (GLFL…GAAM), 509–529 (AVLG…SLCV), and 530–550 (IFLE…VLLI). 2 consecutive CBS domains span residues 594-663 (AKPP…FLTE) and 708-770 (TNTT…AFPL). Residues 735–755 (HLLIVPKIQASGMCPVVGILT) form a helical membrane-spanning segment.

The protein belongs to the chloride channel (TC 2.A.49) family. Homodimer. Interacts with PP2A5. As to expression, broadly expressed in the plant.

It is found in the membrane. Voltage-gated chloride channel. This is Chloride channel protein CLC-b (CLC-B) from Arabidopsis thaliana (Mouse-ear cress).